A 418-amino-acid polypeptide reads, in one-letter code: Maltoporin (418 aa).

The signal sequence occupies residues 1 to 26 (MLPMNRNTLGLAVTIATVFVSSTVTA).

Belongs to the porin LamB (TC 1.B.3) family. Homotrimer formed of three 18-stranded antiparallel beta-barrels, containing three independent channels.

It is found in the cell outer membrane. It carries out the reaction beta-maltose(in) = beta-maltose(out). Functionally, involved in the transport of maltose and maltodextrins. The polypeptide is Maltoporin (Photobacterium profundum (strain SS9)).